The primary structure comprises 111 residues: MISTVSLFWALCVVCIVNMARYFSSLRALLVVLRGCDPLLYQYVDGGGFFTTHGQPNKQMRLVWYIYAQRYRDHHDEEFIRRCERVRRQFLLTSALCGLVVVSLIALMIWH.

Transmembrane regions (helical) follow at residues 1 to 21 (MIST…NMAR) and 90 to 110 (FLLT…LMIW).

This sequence belongs to the universal stress protein B family.

The protein resides in the cell inner membrane. The polypeptide is Universal stress protein B (Salmonella arizonae (strain ATCC BAA-731 / CDC346-86 / RSK2980)).